We begin with the raw amino-acid sequence, 242 residues long: Capsid protein (242 aa).

The Bipartite nuclear localization signal motif lies at 1–42 (MPYKRKLTSYFPQSKRFRGAKSGMAVVKTSASRRLYKKGKRK).

The protein belongs to the geminiviridae capsid protein family. As to quaternary structure, homomultimer. Binds to single-stranded and double-stranded viral DNA. Interacts (via nuclear localization signal) with host importin alpha-1a.

It localises to the virion. It is found in the host nucleus. Functionally, encapsidates the viral genome into characteristic twinned ('geminate') particles. Binds the genomic viral ssDNA and shuttles it into and out of the cell nucleus. Plays a role in protection of the genome from degradation, virus acquisition and transmission by insect vectors, infectivity, and systemic movement. The CP of monopartite geminiviruses is absolutely essential for virus movement. This chain is Capsid protein, found in Solanum lycopersicum (Tomato).